Reading from the N-terminus, the 704-residue chain is Glycine--tRNA ligase beta subunit (704 aa).

The protein belongs to the class-II aminoacyl-tRNA synthetase family. In terms of assembly, tetramer of two alpha and two beta subunits.

It localises to the cytoplasm. The catalysed reaction is tRNA(Gly) + glycine + ATP = glycyl-tRNA(Gly) + AMP + diphosphate. The protein is Glycine--tRNA ligase beta subunit of Delftia acidovorans (strain DSM 14801 / SPH-1).